The primary structure comprises 843 residues: OTU domain-containing protein 7B (843 aa).

The disordered stretch occupies residues G50–D88. Residues T65–R77 are compositionally biased toward basic and acidic residues. S100 carries the phosphoserine modification. Positions E152 to W401 are TRAF-binding. Residues A167–A440 form a catalytic region. Residues L183–M365 form the OTU domain. The tract at residues A187 to N193 is regulatory loop. D191 is a catalytic residue. C194 acts as the Nucleophile in catalysis. H358 functions as the Proton acceptor in the catalytic mechanism. Disordered stretches follow at residues A442–K587 and I652–P711. 2 stretches are compositionally biased toward basic and acidic residues: residues D456 to S471 and S488 to D500. S464, S467, and S471 each carry phosphoserine. Residues R483–R498 carry the Nuclear localization signal motif. Gly residues predominate over residues K531–S543. The span at K665–Q675 shows a compositional bias: basic and acidic residues. T729 bears the Phosphothreonine mark. The segment at R732–L792 is disordered. The A20-type zinc finger occupies P796–E831. 4 residues coordinate Zn(2+): C802, C807, C819, and C822.

The protein belongs to the peptidase C64 family. As to quaternary structure, interacts with ZAP70 in activated T cells, but not in resting T cells. Interacts with TRAF3. Interacts with TRAF6. Interacts with PARK7, leading to inhibit deubiquitinase activity. Interacts with EGFR, ITCH and NEDD4. In terms of processing, phosphorylated by EGFR. Widely expressed. Abundant in kidney, heart and fetal liver. Expressed differentially among B-cells at distinct developmental stages. Higher expression seen in primary immature B-cells as compared to the mature cells.

It localises to the cytoplasm. It is found in the nucleus. The enzyme catalyses Thiol-dependent hydrolysis of ester, thioester, amide, peptide and isopeptide bonds formed by the C-terminal Gly of ubiquitin (a 76-residue protein attached to proteins as an intracellular targeting signal).. With respect to regulation, deubiquitinase activity is inhibited following interaction with PARK7. In terms of biological role, negative regulator of the non-canonical NF-kappa-B pathway that acts by mediating deubiquitination of TRAF3, an inhibitor of the NF-kappa-B pathway, thereby acting as a negative regulator of B-cell responses. In response to non-canonical NF-kappa-B stimuli, deubiquitinates 'Lys-48'-linked polyubiquitin chains of TRAF3, preventing TRAF3 proteolysis and over-activation of non-canonical NF-kappa-B. Negatively regulates mucosal immunity against infections. Deubiquitinates ZAP70, and thereby regulates T cell receptor (TCR) signaling that leads to the activation of NF-kappa-B. Plays a role in T cell homeostasis and is required for normal T cell responses, including production of IFNG and IL2. Mediates deubiquitination of EGFR. Has deubiquitinating activity toward 'Lys-11', 'Lys-48' and 'Lys-63'-linked polyubiquitin chains. Has a much higher catalytic rate with 'Lys-11'-linked polyubiquitin chains (in vitro); however the physiological significance of these data are unsure. Hydrolyzes both linear and branched forms of polyubiquitin. Acts as a regulator of mTORC1 and mTORC2 assembly by mediating 'Lys-63'-linked deubiquitination of MLST8, thereby promoting assembly of the mTORC2 complex, while inibiting formation of the mTORC1 complex. The protein is OTU domain-containing protein 7B (OTUD7B) of Homo sapiens (Human).